A 543-amino-acid polypeptide reads, in one-letter code: Protein male-specific lethal-3 (543 aa).

The Chromo domain occupies Leu-10–Ala-90. A disordered region spans residues Gln-93–Ile-247. Composition is skewed to basic and acidic residues over residues Arg-180–Ser-202, Lys-210–Ser-224, and Ser-234–Ile-247. The region spanning Gln-249–Ser-542 is the MRG domain.

As to quaternary structure, component of the male-specific lethal (MSL) histone acetyltransferase complex, composed of mof, mle, msl-1, msl-2 and msl-3 proteins, as well as roX1 and roX2 non-coding RNAs. In terms of processing, ubiquitinated by msl-2.

It localises to the nucleus. It is found in the chromosome. Its function is as follows. Component of the male-specific lethal (MSL) histone acetyltransferase complex, a multiprotein complex essential for elevating transcription of the single X chromosome in the male (X chromosome dosage compensation). The MSL complex specifically associates with the single X chromosome in males and mediates formation of H4K16ac, promoting a two-fold activation of X chromosome. Acts as a histone reader that specifically recognizes and binds histone H3 trimethylated at 'Lys-36' (H3K36me3) and histone H4 monomethylated at 'Lys-20' (H4K20me1). Within the MSL complex, mediates the spreading of the MSL complex from initiation sites on the male X chromosome to flanking chromatin. Following initial recruitment of the MSL complex to male X chromosome by msl-2, msl-3 binds H3K36me3 and promotes spreading of the MSL complex in cis. In addition to its role in dosage compensation in males, promotes germline stem cell differentiation in females: recognizes and binds H3K36me3, promoting recruitment of the ATAC complex and transcription of genes, such as RpS19b. The protein is Protein male-specific lethal-3 (msl-3) of Drosophila virilis (Fruit fly).